Consider the following 110-residue polypeptide: Nucleoid-associated protein Mkms_4993 (110 aa).

It belongs to the YbaB/EbfC family. As to quaternary structure, homodimer.

The protein localises to the cytoplasm. Its subcellular location is the nucleoid. Binds to DNA and alters its conformation. May be involved in regulation of gene expression, nucleoid organization and DNA protection. The sequence is that of Nucleoid-associated protein Mkms_4993 from Mycobacterium sp. (strain KMS).